The primary structure comprises 238 residues: Orotidine 5'-phosphate decarboxylase (238 aa).

Substrate contacts are provided by residues aspartate 10, lysine 32, 59-68, threonine 122, arginine 184, glutamine 193, glycine 213, and arginine 214; that span reads DLKLHDIPNT. The active-site Proton donor is lysine 61.

It belongs to the OMP decarboxylase family. Type 1 subfamily. Homodimer.

It carries out the reaction orotidine 5'-phosphate + H(+) = UMP + CO2. Its pathway is pyrimidine metabolism; UMP biosynthesis via de novo pathway; UMP from orotate: step 2/2. Its function is as follows. Catalyzes the decarboxylation of orotidine 5'-monophosphate (OMP) to uridine 5'-monophosphate (UMP). The protein is Orotidine 5'-phosphate decarboxylase of Bacillus cereus (strain G9842).